The sequence spans 388 residues: Na(+)/H(+) antiporter NhaA (388 aa).

The next 12 helical transmembrane spans lie at 14 to 34 (TIGI…NSPL), 59 to 79 (LLLW…GLEI), 95 to 115 (TFPA…FASL), 125 to 145 (GWAI…SLLG), 154 to 174 (VFLM…IALF), 177 to 197 (TKLS…LFIM), 200 to 220 (MCVI…VSVL), 222 to 242 (SGVH…YRIN), 257 to 277 (GLHL…NAGV), 295 to 315 (IMLG…YLAV), 328 to 348 (LIQF…SLFI), and 362 to 382 (ADKL…YIVL).

It belongs to the NhaA Na(+)/H(+) (TC 2.A.33) antiporter family.

It localises to the cell inner membrane. It carries out the reaction Na(+)(in) + 2 H(+)(out) = Na(+)(out) + 2 H(+)(in). Na(+)/H(+) antiporter that extrudes sodium in exchange for external protons. The protein is Na(+)/H(+) antiporter NhaA of Nitratiruptor sp. (strain SB155-2).